A 377-amino-acid chain; its full sequence is dTDP-fucopyranose mutase (377 aa).

FAD is bound by residues S12, 31 to 32 (DD), N39, 58 to 59 (HI), R348, and 355 to 360 (LDMDVC).

The protein belongs to the UDP-galactopyranose/dTDP-fucopyranose mutase family. The cofactor is FAD.

It carries out the reaction dTDP-alpha-D-fucose = dTDP-alpha-D-fucofuranose. The protein operates within bacterial outer membrane biogenesis; LPS O-antigen biosynthesis. With respect to regulation, inhibited by Cu(2+), while other divalent cations such as Ca(2+), Co(2+), Fe(2+) and Mg(2+) have no obvious effects on enzyme activity. Its function is as follows. Catalyzes the conversion of dTDP-alpha-D-fucopyranose to dTDP-alpha-D-fucofuranose. This is a step in the biosynthesis of D-fucofuranose, a component of E.coli O52 O antigen. This Escherichia coli protein is dTDP-fucopyranose mutase (fcf2).